The following is a 637-amino-acid chain: tRNA uridine 5-carboxymethylaminomethyl modification enzyme MnmG (637 aa).

FAD-binding positions include 15–20 (GAGHAG), I127, and S182. NAD(+) is bound at residue 276–290 (GPRYCPSIEDKIVRF). Q373 contributes to the FAD binding site.

This sequence belongs to the MnmG family. As to quaternary structure, homodimer. Heterotetramer of two MnmE and two MnmG subunits. Requires FAD as cofactor.

The protein resides in the cytoplasm. Functionally, NAD-binding protein involved in the addition of a carboxymethylaminomethyl (cmnm) group at the wobble position (U34) of certain tRNAs, forming tRNA-cmnm(5)s(2)U34. This is tRNA uridine 5-carboxymethylaminomethyl modification enzyme MnmG from Streptococcus pneumoniae serotype 4 (strain ATCC BAA-334 / TIGR4).